Reading from the N-terminus, the 302-residue chain is DDRGK domain-containing protein 1 (302 aa).

Residues 1–21 (MDPLLLGSVGVLVLAVTLIIW) form a helical membrane-spanning segment. The Cytoplasmic portion of the chain corresponds to 22-302 (RLLKLQWDEK…IRLETPSAAE (281 aa)). The tract at residues 101-178 (EYDEDGKKIG…EREEKERKEH (78 aa)) is disordered. Basic and acidic residues predominate over residues 118-178 (QAKEEKRQMR…EREEKERKEH (61 aa)).

Belongs to the DDRGK1 family.

It localises to the endoplasmic reticulum membrane. Substrate adapter for ufmylation, the covalent attachment of the ubiquitin-like modifier ufm-1 to substrate proteins. The sequence is that of DDRGK domain-containing protein 1 from Caenorhabditis elegans.